Consider the following 337-residue polypeptide: MNTEATHDQNEALTTGARLRNAREQLGLSQQAVAERLCLKVSTVRDIEEDKAPADLASTFLRGYIRSYARLVHIPEEELLPGLEKQAPLRAAKVAPMQSFSLGKRRKKRDGWLMTFTWLVLFVVIGLSGAWWWQDRKAQQEEITTMADQSSAELSSNSEQGQSVPLNTSTTTDPATTSTPPASVDTTATNTQTPAVTAPAPAVDPQQNAVVSPSQANVDTAATPAPTAATTPDGAAPLPTDQAGVTTPVADPNALVMNFTADCWLEVTDATGKKLFSGMQRKDGNLNLTGQAPYKLKIGAPAAVQIQYQGKPVDLSRFIRTNQVARLTLNAEQSPAQ.

At 1-111 (MNTEATHDQN…LGKRRKKRDG (111 aa)) the chain is on the cytoplasmic side. The 53-residue stretch at 19-71 (LRNAREQLGLSQQAVAERLCLKVSTVRDIEEDKAPADLASTFLRGYIRSYARL) folds into the HTH cro/C1-type domain. A DNA-binding region (H-T-H motif) is located at residues 30–49 (QQAVAERLCLKVSTVRDIEE). The helical; Signal-anchor for type II membrane protein transmembrane segment at 112-132 (WLMTFTWLVLFVVIGLSGAWW) threads the bilayer. At 133–337 (WQDRKAQQEE…TLNAEQSPAQ (205 aa)) the chain is on the periplasmic side. The span at 144 to 167 (TTMADQSSAELSSNSEQGQSVPLN) shows a compositional bias: polar residues. Positions 144-235 (TTMADQSSAE…PTAATTPDGA (92 aa)) are disordered. Low complexity predominate over residues 168–207 (TSTTTDPATTSTPPASVDTTATNTQTPAVTAPAPAVDPQQ). Residues 208-218 (NAVVSPSQANV) are compositionally biased toward polar residues. A compositionally biased stretch (low complexity) spans 219–235 (DTAATPAPTAATTPDGA).

It belongs to the RodZ family.

The protein resides in the cell inner membrane. Cytoskeletal protein that is involved in cell-shape control through regulation of the length of the long axis. This chain is Cytoskeleton protein RodZ, found in Escherichia coli (strain K12 / MC4100 / BW2952).